A 198-amino-acid polypeptide reads, in one-letter code: ATP-dependent Clp protease proteolytic subunit (198 aa).

The active-site Nucleophile is the serine 98. Histidine 123 is an active-site residue.

Belongs to the peptidase S14 family. In terms of assembly, fourteen ClpP subunits assemble into 2 heptameric rings which stack back to back to give a disk-like structure with a central cavity, resembling the structure of eukaryotic proteasomes.

It localises to the cytoplasm. It catalyses the reaction Hydrolysis of proteins to small peptides in the presence of ATP and magnesium. alpha-casein is the usual test substrate. In the absence of ATP, only oligopeptides shorter than five residues are hydrolyzed (such as succinyl-Leu-Tyr-|-NHMec, and Leu-Tyr-Leu-|-Tyr-Trp, in which cleavage of the -Tyr-|-Leu- and -Tyr-|-Trp bonds also occurs).. Its function is as follows. Cleaves peptides in various proteins in a process that requires ATP hydrolysis. Has a chymotrypsin-like activity. Plays a major role in the degradation of misfolded proteins. This chain is ATP-dependent Clp protease proteolytic subunit, found in Bacillus pumilus (strain SAFR-032).